The primary structure comprises 357 residues: Arginine kinase Pro c 2.0101 (357 aa).

Residues 9–91 (KLEEGFKKLE…FDPIIEDYHK (83 aa)) enclose the Phosphagen kinase N-terminal domain. 64–68 (GVGIY) is an L-arginine binding site. The region spanning 119–356 (FVISTRVRCG…LELIKIEKEM (238 aa)) is the Phosphagen kinase C-terminal domain. ATP is bound by residues 122 to 126 (STRVR) and histidine 185. An L-arginine-binding site is contributed by glutamate 225. Arginine 229 lines the ATP pocket. Cysteine 271 is an L-arginine binding site. ATP contacts are provided by residues 280 to 284 (RASVH) and 309 to 314 (RGTRGE). Glutamate 314 is an L-arginine binding site.

The protein belongs to the ATP:guanido phosphotransferase family. In terms of processing, glycosylated. In terms of tissue distribution, muscle (at protein level).

It carries out the reaction L-arginine + ATP = N(omega)-phospho-L-arginine + ADP + H(+). Functionally, catalyzes the reversible transfer of high energy ATP gamma-phosphate group to L-arginine. The sequence is that of Arginine kinase Pro c 2.0101 from Procambarus clarkii (Red swamp crayfish).